Here is an 88-residue protein sequence, read N- to C-terminus: Actobindin (88 aa).

At M1 the chain carries N-acetylmethionine. The interval 1–22 is disordered; it reads MNPELQSAIGQGAALKHAETVD. K35 carries the post-translational modification N6,N6,N6-trimethyllysine. The WH2 domain occupies 37–54; it reads DRSSFLEEVAKPHELKHA. N6,N6,N6-trimethyllysine is present on K72.

Monomer.

Functionally, is able to bind two actin monomers at high concentrations of G-actin. This is Actobindin from Acanthamoeba castellanii (Amoeba).